Reading from the N-terminus, the 241-residue chain is ATP synthase subunit a (241 aa).

5 helical membrane-spanning segments follow: residues 30–50 (GQVF…VVVG), 91–111 (FIGT…LVPW), 128–148 (INTT…AGLS), 193–213 (LVVA…VMFL), and 214–234 (GLFT…YYIG).

This sequence belongs to the ATPase A chain family. As to quaternary structure, F-type ATPases have 2 components, CF(1) - the catalytic core - and CF(0) - the membrane proton channel. CF(1) has five subunits: alpha(3), beta(3), gamma(1), delta(1), epsilon(1). CF(0) has four main subunits: a, b, b' and c.

Its subcellular location is the cellular thylakoid membrane. Key component of the proton channel; it plays a direct role in the translocation of protons across the membrane. The chain is ATP synthase subunit a from Prochlorococcus marinus (strain MIT 9303).